A 476-amino-acid chain; its full sequence is Replication factor C large subunit (476 aa).

43–50 (GKPGIGKT) lines the ATP pocket. The tract at residues 435 to 476 (LEALRMQEPPVPETPPAAEEQPLEEPQEEKKLAPKQATLDFF) is disordered.

This sequence belongs to the activator 1 small subunits family. RfcL subfamily. As to quaternary structure, heteromultimer composed of small subunits (RfcS) and large subunits (RfcL).

Its function is as follows. Part of the RFC clamp loader complex which loads the PCNA sliding clamp onto DNA. This is Replication factor C large subunit from Methanocorpusculum labreanum (strain ATCC 43576 / DSM 4855 / Z).